A 91-amino-acid polypeptide reads, in one-letter code: Potassium channel toxin TdiKIK (91 aa).

The first 25 residues, 1–25 (MVATNRCCVFALLVALLLIHSLAEA), serve as a signal peptide directing secretion. A propeptide spanning residues 26-44 (GKGKEVLGKIKNKLVEVKE) is cleaved from the precursor. The 34-residue stretch at 58-91 (EYACPVIDKFCEDHCAAKNAIGKCDDFKCQCLNS) folds into the BetaSPN-type CS-alpha/beta domain. Intrachain disulfides connect C61/C81, C68/C86, and C72/C88.

In terms of tissue distribution, expressed by the venom gland.

The protein resides in the secreted. Its function is as follows. The full peptide presents antibacterial and cytotoxic activities. The synthetic C-terminus (AA 33-76) inhibits voltage-gated potassium channels Kv1.1/KCNA1, Kv1.2/KCNA2, and Kv1.3/KCNA3. This is Potassium channel toxin TdiKIK from Tityus discrepans (Venezuelan scorpion).